We begin with the raw amino-acid sequence, 514 residues long: Histidine ammonia-lyase (514 aa).

A cross-link (5-imidazolinone (Ala-Gly)) is located at residues Ala-146 to Gly-148. Position 147 is a 2,3-didehydroalanine (Ser) (Ser-147).

Belongs to the PAL/histidase family. Post-translationally, contains an active site 4-methylidene-imidazol-5-one (MIO), which is formed autocatalytically by cyclization and dehydration of residues Ala-Ser-Gly.

Its subcellular location is the cytoplasm. It catalyses the reaction L-histidine = trans-urocanate + NH4(+). It functions in the pathway amino-acid degradation; L-histidine degradation into L-glutamate; N-formimidoyl-L-glutamate from L-histidine: step 1/3. This is Histidine ammonia-lyase from Clostridium tetani (strain Massachusetts / E88).